A 142-amino-acid chain; its full sequence is Large ribosomal subunit protein uL13 (142 aa).

Belongs to the universal ribosomal protein uL13 family. As to quaternary structure, part of the 50S ribosomal subunit.

In terms of biological role, this protein is one of the early assembly proteins of the 50S ribosomal subunit, although it is not seen to bind rRNA by itself. It is important during the early stages of 50S assembly. In Dictyoglomus thermophilum (strain ATCC 35947 / DSM 3960 / H-6-12), this protein is Large ribosomal subunit protein uL13.